Consider the following 349-residue polypeptide: Mannonate dehydratase (349 aa).

This sequence belongs to the mannonate dehydratase family. The cofactor is Fe(2+). It depends on Mn(2+) as a cofactor.

The catalysed reaction is D-mannonate = 2-dehydro-3-deoxy-D-gluconate + H2O. It functions in the pathway carbohydrate metabolism; pentose and glucuronate interconversion. In terms of biological role, catalyzes the dehydration of D-mannonate. The sequence is that of Mannonate dehydratase from Oceanobacillus iheyensis (strain DSM 14371 / CIP 107618 / JCM 11309 / KCTC 3954 / HTE831).